Here is a 258-residue protein sequence, read N- to C-terminus: Type III pantothenate kinase 1 (258 aa).

6–13 (DMGNSHIH) lines the ATP pocket. Residue 107–110 (GADR) participates in substrate binding. Asp109 (proton acceptor) is an active-site residue. Asp130 contributes to the K(+) binding site. Thr133 contacts ATP. Thr185 provides a ligand contact to substrate.

Belongs to the type III pantothenate kinase family. In terms of assembly, homodimer. It depends on NH4(+) as a cofactor. K(+) serves as cofactor.

The protein resides in the cytoplasm. The catalysed reaction is (R)-pantothenate + ATP = (R)-4'-phosphopantothenate + ADP + H(+). Its pathway is cofactor biosynthesis; coenzyme A biosynthesis; CoA from (R)-pantothenate: step 1/5. Functionally, catalyzes the phosphorylation of pantothenate (Pan), the first step in CoA biosynthesis. In Francisella tularensis subsp. tularensis (strain FSC 198), this protein is Type III pantothenate kinase 1.